The sequence spans 1832 residues: Putative transcription factor capicua (1832 aa).

Serine 41 and serine 49 each carry phosphoserine. 15 disordered regions span residues 66–121, 135–227, 323–353, 389–427, 444–493, 563–619, 690–739, 784–845, 874–938, 1069–1105, 1151–1178, 1457–1602, 1632–1668, 1701–1733, and 1789–1817; these read ANQS…EVGS, STVG…AHPH, QQQQ…NHNN, NQRQ…AAMR, DGAA…IRRP, DRRK…GGQG, RERV…SGGE, QPTG…VSAP, PMHH…EDDE, TSTL…TISC, GQDE…EQVT, DGGM…STAA, QPED…VQKL, LESS…HRKV, and ASCT…SSTS. Over residues 96–121 the composition is skewed to low complexity; sequence NANNNSSNNNTSSSNNNNNSNWEVGS. Over residues 172 to 186 the composition is skewed to pro residues; the sequence is PPPPPPASLPAPSAP. Composition is skewed to low complexity over residues 187 to 203, 211 to 223, and 323 to 342; these read PTSG…HATS, QQQH…HQQQ, and QQQQ…QQQQ. The segment covering 397–408 has biased composition (acidic residues); that stretch reads EEPDDQLDDDVF. The segment covering 409–422 has biased composition (polar residues); it reads ETTTPGISANSKKQ. A compositionally biased stretch (low complexity) spans 446 to 484; that stretch reads AAGAPATSAAKRRSQSLSALQQQQQQQQQAGAAGTAAGQ. A DNA-binding region (HMG box) is located at residues 490–558; that stretch reads IRRPMNAFMI…AHFKLHPEWK (69 aa). The segment covering 610–619 has biased composition (gly residues); sequence GGSGSCGGQG. Residues 834 to 1832 form an interaction with gro region; it reads GSASGGGVVS…TSAADVFQYY (999 aa). Residues 903–914 are compositionally biased toward basic and acidic residues; the sequence is ESSEKDKPALDD. Over residues 915 to 938 the composition is skewed to acidic residues; sequence QERDEVEEEDEDEEDDDEDDEDDE. The span at 1078-1091 shows a compositional bias: polar residues; it reads NPANNEAPNKFSNF. Residues 1092–1105 are compositionally biased toward low complexity; the sequence is PTQHQPTTTTTISC. Residues 1462-1471 are compositionally biased toward low complexity; sequence GCASAAASGG. The segment covering 1503–1525 has biased composition (polar residues); the sequence is LSQSKSESNVSFGANLGASNGQH. Residues 1547–1589 are compositionally biased toward low complexity; the sequence is NSSNLSSALPTPTSSTTTPNSDEQLPLTPTTSSSNSNLNQQQP. Phosphothreonine is present on threonine 1716. The span at 1724 to 1733 shows a compositional bias: basic and acidic residues; the sequence is DASEKGHRKV. Polar residues predominate over residues 1789 to 1799; it reads ASCTPHSAGPN. The span at 1800–1817 shows a compositional bias: low complexity; that stretch reads TPSDSNSSSTTLSASSTS.

Interacts with gro. As to expression, expressed in the central region of embryos. Also expressed in ovarian follicle cells, the wing imaginal disks and the wing pouch.

The protein localises to the nucleus. Transcriptional repressor required for the specification of numerous cell types during embryonic development. Required for terminal patterning of early embryos. May associate with gro to repress tll and hkb, restricting their expression to embryonic terminal poles where they initiate correct development of head and tail structures. Required for dorsoventral patterning of oocytes and early embryos. Cooperates with dl to repress zen and other dorsal specific genes within the embryo and promotes expression of the ventralizing factor pip in ovarian follicle cells. Required during wing development for the specification of intervein areas, where it mediates localized repression of vein specific genes such as aos, dpp and vvl. In Drosophila melanogaster (Fruit fly), this protein is Putative transcription factor capicua (cic).